We begin with the raw amino-acid sequence, 128 residues long: Aspartate 1-decarboxylase (128 aa).

The active-site Schiff-base intermediate with substrate; via pyruvic acid is Ser25. Position 25 is a pyruvic acid (Ser) (Ser25). A substrate-binding site is contributed by Thr57. Tyr58 acts as the Proton donor in catalysis. 73–75 provides a ligand contact to substrate; that stretch reads GSA.

It belongs to the PanD family. Heterooctamer of four alpha and four beta subunits. The cofactor is pyruvate. Post-translationally, is synthesized initially as an inactive proenzyme, which is activated by self-cleavage at a specific serine bond to produce a beta-subunit with a hydroxyl group at its C-terminus and an alpha-subunit with a pyruvoyl group at its N-terminus.

The protein localises to the cytoplasm. The catalysed reaction is L-aspartate + H(+) = beta-alanine + CO2. It functions in the pathway cofactor biosynthesis; (R)-pantothenate biosynthesis; beta-alanine from L-aspartate: step 1/1. Catalyzes the pyruvoyl-dependent decarboxylation of aspartate to produce beta-alanine. This chain is Aspartate 1-decarboxylase, found in Paraburkholderia xenovorans (strain LB400).